A 130-amino-acid chain; its full sequence is Small ribosomal subunit protein uS8 (130 aa).

This sequence belongs to the universal ribosomal protein uS8 family. Part of the 30S ribosomal subunit. Contacts proteins S5 and S12.

Its function is as follows. One of the primary rRNA binding proteins, it binds directly to 16S rRNA central domain where it helps coordinate assembly of the platform of the 30S subunit. In Aeromonas hydrophila subsp. hydrophila (strain ATCC 7966 / DSM 30187 / BCRC 13018 / CCUG 14551 / JCM 1027 / KCTC 2358 / NCIMB 9240 / NCTC 8049), this protein is Small ribosomal subunit protein uS8.